Here is a 185-residue protein sequence, read N- to C-terminus: C-type lectin domain family 5 member A (185 aa).

Over 1 to 4 the chain is Cytoplasmic; that stretch reads MNWH. Residues 5-27 traverse the membrane as a helical; Signal-anchor for type II membrane protein segment; the sequence is MIISGLIVVVLKIVGMTFFLLYF. Residues 28–185 lie on the Extracellular side of the membrane; that stretch reads PQIFGEHNVS…YRSICEKSAQ (158 aa). N-linked (GlcNAc...) asparagine glycans are attached at residues asparagine 35 and asparagine 55. Cysteine 68 and cysteine 79 are joined by a disulfide. Residues 75–181 enclose the C-type lectin domain; sequence HQGRCFFLST…CDVNYRSICE (107 aa). 4 N-linked (GlcNAc...) asparagine glycosylation sites follow: asparagine 90, asparagine 117, asparagine 141, and asparagine 146. Cystine bridges form between cysteine 96-cysteine 180 and cysteine 158-cysteine 172.

As to quaternary structure, monomer. Homodimer. The majority of CLEC5A is expressed as a monomeric form on macrophages. Interacts with TYROBP/DAP12. The interaction with TYROBP is required for CLEC5 cell surface expression. Interacts with HCST/DAP10. Forms a CLEC5A/TYROBP/HCST trimolecular complex depending almost solely on TYROBP. Post-translationally, N-glycosylated. Contains sialic acid residues. As to expression, constitutively expressed in monocytes and macrophages.

It is found in the cell membrane. Functions as a positive regulator of osteoclastogenesis. Cell surface receptor that signals via TYROBP. Regulates inflammatory responses. The polypeptide is C-type lectin domain family 5 member A (CLEC5A) (Sus scrofa (Pig)).